The sequence spans 310 residues: Aspartate carbamoyltransferase catalytic subunit 1 (310 aa).

Carbamoyl phosphate contacts are provided by Arg55 and Thr56. Lys85 serves as a coordination point for L-aspartate. The carbamoyl phosphate site is built by Arg106, His134, and Gln137. L-aspartate contacts are provided by Arg167 and Arg228. Residues Leu266 and Pro267 each contribute to the carbamoyl phosphate site.

This sequence belongs to the aspartate/ornithine carbamoyltransferase superfamily. ATCase family. As to quaternary structure, heterododecamer (2C3:3R2) of six catalytic PyrB chains organized as two trimers (C3), and six regulatory PyrI chains organized as three dimers (R2).

It carries out the reaction carbamoyl phosphate + L-aspartate = N-carbamoyl-L-aspartate + phosphate + H(+). It participates in pyrimidine metabolism; UMP biosynthesis via de novo pathway; (S)-dihydroorotate from bicarbonate: step 2/3. In terms of biological role, catalyzes the condensation of carbamoyl phosphate and aspartate to form carbamoyl aspartate and inorganic phosphate, the committed step in the de novo pyrimidine nucleotide biosynthesis pathway. This chain is Aspartate carbamoyltransferase catalytic subunit 1, found in Shewanella halifaxensis (strain HAW-EB4).